We begin with the raw amino-acid sequence, 666 residues long: Probable potassium transport system protein Kup (666 aa).

Transmembrane regions (helical) follow at residues 16-36, 58-78, 100-120, 141-161, 165-185, 221-241, 253-273, 292-312, 343-363, 373-393, 399-419, and 424-444; these read GFII…LYTM, ISLI…LIAL, PWLI…GALT, IYQN…VLFG, FGTG…FSFL, IFIL…YSDL, WPFV…WILA, LTVY…QALI, LYIP…VLYF, YGLA…YYLI, PFLA…FFWA, and FMHG…VMFI.

It belongs to the HAK/KUP transporter (TC 2.A.72) family.

It is found in the cell membrane. It catalyses the reaction K(+)(in) + H(+)(in) = K(+)(out) + H(+)(out). In terms of biological role, transport of potassium into the cell. Likely operates as a K(+):H(+) symporter. This Streptococcus pyogenes serotype M5 (strain Manfredo) protein is Probable potassium transport system protein Kup.